A 393-amino-acid polypeptide reads, in one-letter code: Bifunctional enzyme Fae/Hps (393 aa).

Positions M1–V161 are formaldehyde-activating enzyme. The Proton donor role is filled by H17. Substrate-binding residues include D19, L48, K66, T68, and Q83. Residues M162–F393 form a 3-hexulose-6-phosphate synthase region.

The protein in the N-terminal section; belongs to the formaldehyde-activating enzyme family. It in the C-terminal section; belongs to the HPS/KGPDC family. HPS subfamily.

The catalysed reaction is 5,6,7,8-tetrahydromethanopterin + formaldehyde = 5,10-methylenetetrahydromethanopterin + H2O. The enzyme catalyses D-ribulose 5-phosphate + formaldehyde = D-arabino-hex-3-ulose 6-phosphate. It functions in the pathway carbohydrate biosynthesis; D-ribose 5-phosphate biosynthesis. In terms of biological role, catalyzes the condensation of formaldehyde with tetrahydromethanopterin (H(4)MPT) to 5,10-methylenetetrahydromethanopterin. Catalyzes the reversible formation of ribulose-5-phosphate and formaldehyde from 3-hexulose-6-phosphate. The chain is Bifunctional enzyme Fae/Hps from Methanoculleus marisnigri (strain ATCC 35101 / DSM 1498 / JR1).